Consider the following 266-residue polypeptide: MNYQLFKHSDENASYVVFSSGLGGHGSFWQAQLDVFRQYFHVLIYDQEGCHASSELLADGYSFEHLALQVKQLLQQLNIVRFHFIGHALGGFIGIELAHRYASETCQLLSLTLINAWQQLDPHTLRCFTTRIALLQHAGTAAYLHAQALFLYPPLWISEHTALLEQQEAKMQSDFPPHANVLKRLNALMQYQVNTARIDTLKQLPVCLIANQDDMLVPYVQSLNLWKKLPDAQLKLLPYGGHASTVTEARQVNQLMLDFLKTSAPT.

Belongs to the AB hydrolase superfamily. Hydrolase RutD family.

It carries out the reaction carbamate + 2 H(+) = NH4(+) + CO2. Functionally, involved in pyrimidine catabolism. May facilitate the hydrolysis of carbamate, a reaction that can also occur spontaneously. This Acinetobacter baylyi (strain ATCC 33305 / BD413 / ADP1) protein is Putative carbamate hydrolase RutD.